A 287-amino-acid polypeptide reads, in one-letter code: UPF0354 protein SSP1020 (287 aa).

It belongs to the UPF0354 family.

The polypeptide is UPF0354 protein SSP1020 (Staphylococcus saprophyticus subsp. saprophyticus (strain ATCC 15305 / DSM 20229 / NCIMB 8711 / NCTC 7292 / S-41)).